Consider the following 231-residue polypeptide: Thiamine import ATP-binding protein ThiQ (231 aa).

Residues 2–230 (LRLEDLDIRK…PPPALRGYLG (229 aa)) form the ABC transporter domain. Residue 32-39 (GPSGAGKS) coordinates ATP.

It belongs to the ABC transporter superfamily. Thiamine importer (TC 3.A.1.19.1) family. As to quaternary structure, the complex is composed of two ATP-binding proteins (ThiQ), two transmembrane proteins (ThiP) and a solute-binding protein (ThiB).

It is found in the cell inner membrane. The catalysed reaction is thiamine(out) + ATP + H2O = thiamine(in) + ADP + phosphate + H(+). Functionally, part of the ABC transporter complex ThiBPQ involved in thiamine import. Responsible for energy coupling to the transport system. The polypeptide is Thiamine import ATP-binding protein ThiQ (Ruegeria sp. (strain TM1040) (Silicibacter sp.)).